The following is a 362-amino-acid chain: UDP-N-acetylglucosamine--N-acetylmuramyl-(pentapeptide) pyrophosphoryl-undecaprenol N-acetylglucosamine transferase (362 aa).

UDP-N-acetyl-alpha-D-glucosamine contacts are provided by residues 14 to 16 (TGG), Arg170, Ser199, and Gln289.

This sequence belongs to the glycosyltransferase 28 family. MurG subfamily.

Its subcellular location is the cell inner membrane. The catalysed reaction is di-trans,octa-cis-undecaprenyl diphospho-N-acetyl-alpha-D-muramoyl-L-alanyl-D-glutamyl-meso-2,6-diaminopimeloyl-D-alanyl-D-alanine + UDP-N-acetyl-alpha-D-glucosamine = di-trans,octa-cis-undecaprenyl diphospho-[N-acetyl-alpha-D-glucosaminyl-(1-&gt;4)]-N-acetyl-alpha-D-muramoyl-L-alanyl-D-glutamyl-meso-2,6-diaminopimeloyl-D-alanyl-D-alanine + UDP + H(+). Its pathway is cell wall biogenesis; peptidoglycan biosynthesis. In terms of biological role, cell wall formation. Catalyzes the transfer of a GlcNAc subunit on undecaprenyl-pyrophosphoryl-MurNAc-pentapeptide (lipid intermediate I) to form undecaprenyl-pyrophosphoryl-MurNAc-(pentapeptide)GlcNAc (lipid intermediate II). The polypeptide is UDP-N-acetylglucosamine--N-acetylmuramyl-(pentapeptide) pyrophosphoryl-undecaprenol N-acetylglucosamine transferase (Borrelia turicatae (strain 91E135)).